The chain runs to 293 residues: Notch homolog 2 N-terminal-like protein C (293 aa).

EGF-like domains follow at residues 42 to 81, 82 to 120, 123 to 161, and 162 to 198; these read PPRMCRDGYEPCVNEGMCVTYHNGTGYCKCPEGFLGEYCQ, HRDPCEKNRCQNGGTCVAQAMLGKATCRCASGFTGEDCQ, TSHPCFVSRPCLNGGTCHMLSRDTYECTCQVGFTGKECQ, and WTDACLSHPCANGSTCTTVANQFSCKCLTGFTGQKCE. 17 cysteine pairs are disulfide-bonded: cysteine 46–cysteine 59, cysteine 53–cysteine 69, cysteine 71–cysteine 80, cysteine 86–cysteine 97, cysteine 91–cysteine 108, cysteine 110–cysteine 119, cysteine 127–cysteine 139, cysteine 133–cysteine 149, cysteine 151–cysteine 160, cysteine 166–cysteine 177, cysteine 171–cysteine 186, cysteine 188–cysteine 197, cysteine 204–cysteine 216, cysteine 210–cysteine 225, cysteine 227–cysteine 236, cysteine 243–cysteine 254, and cysteine 248–cysteine 264. An N-linked (GlcNAc...) asparagine glycan is attached at asparagine 64. A glycan (N-linked (GlcNAc...) asparagine) is linked at asparagine 173. The EGF-like 5; calcium-binding domain maps to 200–237; the sequence is DVNECDIPGHCQHGGTCLNLPGSYQCQCLQGFTGQYCD. One can recognise an EGF-like 6 domain in the interval 239–276; that stretch reads LYVPCAPSPCVNGGTCRQTGDFTFECNCLPETVRRGTE.

The protein belongs to the NOTCH family. As to quaternary structure, interacts with NOTCH2. Interacts with DLL1; the interaction is direct. As to expression, expressed in radial glia neural stem cells during cortical development.

Its subcellular location is the secreted. Its function is as follows. Human-specific protein that promotes neural progenitor proliferation and evolutionary expansion of the brain neocortex by regulating the Notch signaling pathway. Able to promote neural progenitor self-renewal, possibly by down-regulating neuronal differentiation genes, thereby delaying the differentiation of neuronal progenitors and leading to an overall final increase in neuronal production. Acts by enhancing the Notch signaling pathway via two different mechanisms that probably work in parallel to reach the same effect. Enhances Notch signaling pathway in a non-cell-autonomous manner via direct interaction with NOTCH2. Also promotes Notch signaling pathway in a cell-autonomous manner through inhibition of cis DLL1-NOTCH2 interactions, which promotes neuronal differentiation. This is Notch homolog 2 N-terminal-like protein C from Homo sapiens (Human).